A 294-amino-acid polypeptide reads, in one-letter code: Flavin-dependent thymidylate synthase (294 aa).

Residues 27–250 (GFIRVIDYMG…PFVYEAFEEY (224 aa)) enclose the ThyX domain. Residues Thr-73, 96 to 98 (RHR), and Glu-104 contribute to the FAD site. DUMP contacts are provided by residues 93-96 (QWIR), 104-108 (EYSAR), and Arg-189. Residues 96–106 (RHRTASVNEYS) carry the ThyX motif motif. Residues 205-207 (NLH) and His-211 each bind FAD. Arg-216 lines the dUMP pocket. The Involved in ionization of N3 of dUMP, leading to its activation role is filled by Arg-216.

Belongs to the thymidylate synthase ThyX family. As to quaternary structure, homotetramer. It depends on FAD as a cofactor.

It catalyses the reaction dUMP + (6R)-5,10-methylene-5,6,7,8-tetrahydrofolate + NADPH + H(+) = dTMP + (6S)-5,6,7,8-tetrahydrofolate + NADP(+). It functions in the pathway pyrimidine metabolism; dTTP biosynthesis. Functionally, catalyzes the reductive methylation of 2'-deoxyuridine-5'-monophosphate (dUMP) to 2'-deoxythymidine-5'-monophosphate (dTMP) while utilizing 5,10-methylenetetrahydrofolate (mTHF) as the methyl donor, and NADPH and FADH(2) as the reductant. The polypeptide is Flavin-dependent thymidylate synthase (Rickettsia conorii (strain ATCC VR-613 / Malish 7)).